We begin with the raw amino-acid sequence, 149 residues long: SsrA-binding protein (149 aa).

The protein belongs to the SmpB family.

It is found in the cytoplasm. Required for rescue of stalled ribosomes mediated by trans-translation. Binds to transfer-messenger RNA (tmRNA), required for stable association of tmRNA with ribosomes. tmRNA and SmpB together mimic tRNA shape, replacing the anticodon stem-loop with SmpB. tmRNA is encoded by the ssrA gene; the 2 termini fold to resemble tRNA(Ala) and it encodes a 'tag peptide', a short internal open reading frame. During trans-translation Ala-aminoacylated tmRNA acts like a tRNA, entering the A-site of stalled ribosomes, displacing the stalled mRNA. The ribosome then switches to translate the ORF on the tmRNA; the nascent peptide is terminated with the 'tag peptide' encoded by the tmRNA and targeted for degradation. The ribosome is freed to recommence translation, which seems to be the essential function of trans-translation. The sequence is that of SsrA-binding protein from Anaplasma phagocytophilum (strain HZ).